A 557-amino-acid polypeptide reads, in one-letter code: 6-phosphofructo-2-kinase/fructose-2,6-bisphosphatase 2 (557 aa).

Residues 1–16 (MSENSTFSTEDSSSSS) are compositionally biased toward low complexity. The tract at residues 1 to 21 (MSENSTFSTEDSSSSSYKPHA) is disordered. The residue at position 2 (Ser2) is an N-acetylserine. The 6-phosphofructo-2-kinase stretch occupies residues 2–251 (SENSTFSTED…VYYLMNIHVH (250 aa)). The residue at position 32 (Ser32) is a Phosphoserine; by PKA. Residue 48 to 56 (GLPARGKTY) coordinates ATP. 2 residues coordinate beta-D-fructose 6-phosphate: Arg81 and Arg105. Residue Asp131 is part of the active site. Residues Thr133 and Arg139 each contribute to the beta-D-fructose 6-phosphate site. The active site involves Cys161. Position 170 to 175 (170 to 175 (NILEVK)) interacts with ATP. The beta-D-fructose 6-phosphate site is built by Lys175, Arg196, and Tyr200. The segment at 252–557 (PRTIYLCRHG…PSMASLTLLS (306 aa)) is fructose-2,6-bisphosphatase. Arg259 serves as a coordination point for beta-D-fructose 2,6-bisphosphate. Residue His260 is the Tele-phosphohistidine intermediate of the active site. Asn266 and Gly272 together coordinate beta-D-fructose 2,6-bisphosphate. Glu329 acts as the Proton donor/acceptor in catalysis. Residues Tyr340, Arg354, Lys358, Tyr369, Gln395, and Arg399 each coordinate beta-D-fructose 2,6-bisphosphate. Residue 351 to 354 (FALR) participates in ATP binding. ATP is bound by residues 395 to 399 (QAVMR) and Tyr431. The interval 449-495 (RDKPTHNFPKSQTPVRMRRNSFTPLSSSNTIRRPRNYSVGSRPLKPL) is disordered. Polar residues predominate over residues 456 to 479 (FPKSQTPVRMRRNSFTPLSSSNTI). At Ser469 the chain carries Phosphoserine. Thr471 carries the phosphothreonine modification. Thr478 carries the phosphothreonine; by PKC modification. Phosphoserine is present on residues Ser486 and Ser496.

It in the C-terminal section; belongs to the phosphoglycerate mutase family. Homodimer. Forms a heterodimer with PFKFB3. Phosphorylation by AMPK stimulates activity.

The catalysed reaction is beta-D-fructose 2,6-bisphosphate + H2O = beta-D-fructose 6-phosphate + phosphate. It carries out the reaction beta-D-fructose 6-phosphate + ATP = beta-D-fructose 2,6-bisphosphate + ADP + H(+). With respect to regulation, phosphorylation results in the activation of the kinase activity. Its function is as follows. Synthesis and degradation of fructose 2,6-bisphosphate. In Rattus norvegicus (Rat), this protein is 6-phosphofructo-2-kinase/fructose-2,6-bisphosphatase 2 (Pfkfb2).